The primary structure comprises 380 residues: Probable protein phosphatase 2C 2 (380 aa).

The region spanning 69-339 (RSGSFADIGP…DNLTVIVICF (271 aa)) is the PPM-type phosphatase domain. Residues Asp-113, Gly-114, Asp-287, and Asp-330 each contribute to the Mn(2+) site.

It belongs to the PP2C family. Requires Mg(2+) as cofactor. Mn(2+) is required as a cofactor.

The catalysed reaction is O-phospho-L-seryl-[protein] + H2O = L-seryl-[protein] + phosphate. The enzyme catalyses O-phospho-L-threonyl-[protein] + H2O = L-threonyl-[protein] + phosphate. In Oryza sativa subsp. japonica (Rice), this protein is Probable protein phosphatase 2C 2.